Consider the following 404-residue polypeptide: Omega-3 fatty acid desaturase, chloroplastic (404 aa).

The tract at residues 28–50 (TVDSSSSPPIEEEPKTQRFDPGA) is disordered. The Histidine box-1 motif lies at 121 to 125 (HDCGH). The Histidine box-2 motif lies at 157–161 (HRTHH). Positions 324-328 (HVIHH) match the Histidine box-3 motif.

This sequence belongs to the fatty acid desaturase type 1 family.

The protein localises to the plastid. It localises to the chloroplast membrane. It functions in the pathway lipid metabolism; polyunsaturated fatty acid biosynthesis. In terms of biological role, chloroplast omega-3 fatty acid desaturase introduces the third double bond in the biosynthesis of 16:3 and 18:3 fatty acids, important constituents of plant membranes. It is thought to use ferredoxin as an electron donor and to act on fatty acids esterified to galactolipids, sulfolipids and phosphatidylglycerol. This Brassica napus (Rape) protein is Omega-3 fatty acid desaturase, chloroplastic (FAD7).